Reading from the N-terminus, the 163-residue chain is NADH-quinone oxidoreductase subunit J (163 aa).

5 helical membrane passes run 1–21 (MEFVFYACSLIAVISTLLVII), 30–50 (LYLIISLLSISGIFFIFGAFF), 54–74 (LEVVIYAGAIIVLFVFVIMML), 94–114 (IGPSFLSLILFLLMTYAIFFV), and 138–158 (LLLVELSSLLLLSALVVVFHI).

The protein belongs to the complex I subunit 6 family. Composed of 13 different subunits. Subunits NuoA, H, J, K, L, M, N constitute the membrane sector of the complex.

The protein localises to the cell membrane. The catalysed reaction is a quinone + NADH + 5 H(+)(in) = a quinol + NAD(+) + 4 H(+)(out). Its function is as follows. NDH-1 shuttles electrons from NADH, via FMN and iron-sulfur (Fe-S) centers, to quinones in the respiratory chain. Couples the redox reaction to proton translocation (for every two electrons transferred, four hydrogen ions are translocated across the cytoplasmic membrane), and thus conserves the redox energy in a proton gradient. The polypeptide is NADH-quinone oxidoreductase subunit J (nuoJ) (Buchnera aphidicola subsp. Schizaphis graminum (strain Sg)).